The chain runs to 25 residues: Germin-like protein (25 aa).

It belongs to the germin family.

This is Germin-like protein from Populus euphratica (Euphrates poplar).